The following is a 113-amino-acid chain: ATP-dependent Clp protease adapter protein ClpS (113 aa).

It belongs to the ClpS family. As to quaternary structure, binds to the N-terminal domain of the chaperone ClpA.

Involved in the modulation of the specificity of the ClpAP-mediated ATP-dependent protein degradation. This chain is ATP-dependent Clp protease adapter protein ClpS, found in Leptospira biflexa serovar Patoc (strain Patoc 1 / Ames).